We begin with the raw amino-acid sequence, 48 residues long: Small, acid-soluble spore protein P (48 aa).

A compositionally biased stretch (basic and acidic residues) spans methionine 1–lysine 12. The interval methionine 1 to methionine 48 is disordered. A compositionally biased stretch (basic residues) spans lysine 30–methionine 48.

This sequence belongs to the SspP family.

It is found in the spore core. The chain is Small, acid-soluble spore protein P from Bacillus licheniformis (strain ATCC 14580 / DSM 13 / JCM 2505 / CCUG 7422 / NBRC 12200 / NCIMB 9375 / NCTC 10341 / NRRL NRS-1264 / Gibson 46).